A 70-amino-acid chain; its full sequence is Conotoxin Pl171 (70 aa).

Residues 1–21 (MGMRMMFTMILLVVLVTTVVS) form the signal peptide. 2 cysteine pairs are disulfide-bonded: cysteine 54-cysteine 61 and cysteine 55-cysteine 67. At phenylalanine 69 the chain carries Phenylalanine amide.

This sequence belongs to the conotoxin A superfamily. As to expression, expressed by the venom duct.

It localises to the secreted. Its function is as follows. Probable neurotoxin with unknown target. Possibly targets ion channels. This Conus planorbis (Planorbis cone) protein is Conotoxin Pl171.